Consider the following 132-residue polypeptide: Fatty acid-binding protein 12 (132 aa).

A fatty acid is bound by residues arginine 107 and 127–129 (RTY).

It belongs to the calycin superfamily. Fatty-acid binding protein (FABP) family. As to expression, highly expressed in adult retina and testis with lower levels in cerebral cortex, kidney and epididymis. In the retina, strongly expressed in the ganglion cell layer and throughout the inner nuclear layer in amacrine and bipolar cells. Not expressed in the outer nuclear layer. In the testis, detected in the seminiferous tubules.

In terms of biological role, may play a role in lipid transport. This chain is Fatty acid-binding protein 12, found in Rattus norvegicus (Rat).